Consider the following 300-residue polypeptide: Ecto-ADP-ribosyltransferase 4 (300 aa).

The first 23 residues, Met-1 to Ala-23, serve as a signal peptide directing secretion. Over Gly-24–Cys-269 the chain is Extracellular. Disulfide bonds link Cys-48/Cys-259 and Cys-161/Cys-210. One can recognise a TR mART core domain in the interval Lys-70–Ser-255. 2 N-linked (GlcNAc...) asparagine glycosylation sites follow: Asn-110 and Asn-157. Residue Gln-185 coordinates NAD(+). Asn-201 is a glycosylation site (N-linked (GlcNAc...) asparagine). An NAD(+)-binding site is contributed by Ser-219. A glycan (N-linked (GlcNAc...) asparagine) is linked at Asn-253. Ala-264 carries the GPI-anchor amidated alanine lipid modification. Positions Cys-265–Phe-300 are cleaved as a propeptide — removed in mature form. The helical transmembrane segment at Ala-270–Ile-286 threads the bilayer. Topologically, residues Ser-287–Phe-300 are cytoplasmic.

It belongs to the Arg-specific ADP-ribosyltransferase family.

The protein localises to the membrane. The protein resides in the cell membrane. The enzyme catalyses L-arginyl-[protein] + NAD(+) = N(omega)-(ADP-D-ribosyl)-L-arginyl-[protein] + nicotinamide + H(+). This chain is Ecto-ADP-ribosyltransferase 4 (Art4), found in Mus musculus (Mouse).